A 165-amino-acid polypeptide reads, in one-letter code: Phosphopantetheine adenylyltransferase (165 aa).

S10 is a substrate binding site. ATP-binding positions include 10-11 (SF) and H18. Substrate contacts are provided by K42, T79, and R93. Residues 94–96 (GLR), E104, and 129–135 (VRPITAT) each bind ATP.

The protein belongs to the bacterial CoaD family. Homohexamer. The cofactor is Mg(2+).

It localises to the cytoplasm. It catalyses the reaction (R)-4'-phosphopantetheine + ATP + H(+) = 3'-dephospho-CoA + diphosphate. It functions in the pathway cofactor biosynthesis; coenzyme A biosynthesis; CoA from (R)-pantothenate: step 4/5. Functionally, reversibly transfers an adenylyl group from ATP to 4'-phosphopantetheine, yielding dephospho-CoA (dPCoA) and pyrophosphate. In Nitrobacter winogradskyi (strain ATCC 25391 / DSM 10237 / CIP 104748 / NCIMB 11846 / Nb-255), this protein is Phosphopantetheine adenylyltransferase.